Reading from the N-terminus, the 464-residue chain is Protein FAM90A11 (464 aa).

Disordered stretches follow at residues 1-42, 70-389, and 415-437; these read MMAR…DPRL, PATL…HDGA, and HSPE…SEAP. 2 stretches are compositionally biased toward basic and acidic residues: residues 74–89 and 97–114; these read GKKE…KPRV and NKDK…DPQR. Positions 180–197 are enriched in low complexity; it reads LASLSPLRKASLSSSSSL. The segment covering 341 to 356 has biased composition (polar residues); the sequence is GPSTSPQMGRRTSAQV.

The protein belongs to the FAM90 family.

The polypeptide is Protein FAM90A11 (Homo sapiens (Human)).